Here is a 199-residue protein sequence, read N- to C-terminus: Cytochrome c oxidase subunit 2 (199 aa).

The chain crosses the membrane as a helical span at residues 1 to 13 (AICSLVLYLLTLM). Residues 14–26 (LMEKLSSNSVDAQ) are Mitochondrial matrix-facing. Residues 27–54 (EVELVWTILPAIVLILLALPSLQILYMM) traverse the membrane as a helical segment. Residues 55–199 (DEIDEPDLTL…SSLLSTSSSL (145 aa)) are Mitochondrial intermembrane-facing. The Cu cation site is built by His128, Cys163, Glu165, Cys167, His171, and Met174. Residue Glu165 participates in Mg(2+) binding.

It belongs to the cytochrome c oxidase subunit 2 family. In terms of assembly, component of the cytochrome c oxidase (complex IV, CIV), a multisubunit enzyme composed of 14 subunits. The complex is composed of a catalytic core of 3 subunits MT-CO1, MT-CO2 and MT-CO3, encoded in the mitochondrial DNA, and 11 supernumerary subunits COX4I, COX5A, COX5B, COX6A, COX6B, COX6C, COX7A, COX7B, COX7C, COX8 and NDUFA4, which are encoded in the nuclear genome. The complex exists as a monomer or a dimer and forms supercomplexes (SCs) in the inner mitochondrial membrane with NADH-ubiquinone oxidoreductase (complex I, CI) and ubiquinol-cytochrome c oxidoreductase (cytochrome b-c1 complex, complex III, CIII), resulting in different assemblies (supercomplex SCI(1)III(2)IV(1) and megacomplex MCI(2)III(2)IV(2)). Found in a complex with TMEM177, COA6, COX18, COX20, SCO1 and SCO2. Interacts with TMEM177 in a COX20-dependent manner. Interacts with COX20. Interacts with COX16. The cofactor is Cu cation.

It localises to the mitochondrion inner membrane. The enzyme catalyses 4 Fe(II)-[cytochrome c] + O2 + 8 H(+)(in) = 4 Fe(III)-[cytochrome c] + 2 H2O + 4 H(+)(out). Functionally, component of the cytochrome c oxidase, the last enzyme in the mitochondrial electron transport chain which drives oxidative phosphorylation. The respiratory chain contains 3 multisubunit complexes succinate dehydrogenase (complex II, CII), ubiquinol-cytochrome c oxidoreductase (cytochrome b-c1 complex, complex III, CIII) and cytochrome c oxidase (complex IV, CIV), that cooperate to transfer electrons derived from NADH and succinate to molecular oxygen, creating an electrochemical gradient over the inner membrane that drives transmembrane transport and the ATP synthase. Cytochrome c oxidase is the component of the respiratory chain that catalyzes the reduction of oxygen to water. Electrons originating from reduced cytochrome c in the intermembrane space (IMS) are transferred via the dinuclear copper A center (CU(A)) of subunit 2 and heme A of subunit 1 to the active site in subunit 1, a binuclear center (BNC) formed by heme A3 and copper B (CU(B)). The BNC reduces molecular oxygen to 2 water molecules using 4 electrons from cytochrome c in the IMS and 4 protons from the mitochondrial matrix. The polypeptide is Cytochrome c oxidase subunit 2 (MT-CO2) (Apteryx australis (Southern brown kiwi)).